A 130-amino-acid chain; its full sequence is Small ribosomal subunit protein uS11 (130 aa).

It belongs to the universal ribosomal protein uS11 family. As to quaternary structure, part of the 30S ribosomal subunit. Interacts with proteins S7 and S18. Binds to IF-3.

Located on the platform of the 30S subunit, it bridges several disparate RNA helices of the 16S rRNA. Forms part of the Shine-Dalgarno cleft in the 70S ribosome. The sequence is that of Small ribosomal subunit protein uS11 from Nautilia profundicola (strain ATCC BAA-1463 / DSM 18972 / AmH).